The following is a 705-amino-acid chain: Elongation factor G (705 aa).

One can recognise a tr-type G domain in the interval 8–290; the sequence is HRYRNIGIMA…GVIHLLPSPA (283 aa). GTP is bound by residues 17 to 24, 88 to 92, and 142 to 145; these read AHIDAGKT, DTPGH, and NKMD.

It belongs to the TRAFAC class translation factor GTPase superfamily. Classic translation factor GTPase family. EF-G/EF-2 subfamily.

It is found in the cytoplasm. In terms of biological role, catalyzes the GTP-dependent ribosomal translocation step during translation elongation. During this step, the ribosome changes from the pre-translocational (PRE) to the post-translocational (POST) state as the newly formed A-site-bound peptidyl-tRNA and P-site-bound deacylated tRNA move to the P and E sites, respectively. Catalyzes the coordinated movement of the two tRNA molecules, the mRNA and conformational changes in the ribosome. The polypeptide is Elongation factor G (Xylella fastidiosa (strain 9a5c)).